Reading from the N-terminus, the 1026-residue chain is Unconventional myosin-Ic (1026 aa).

An N-acetylmethionine modification is found at Met-1. The 684-residue stretch at 12 to 695 (GVQDFLLLEN…TLFITEDALE (684 aa)) folds into the Myosin motor domain. Residues Asn-53, Tyr-61, 104-113 (SGESGAGKTE), and 157-161 (NDNSS) each bind ATP. N6-methyllysine is present on Lys-349. Residues 572 to 594 (LAKLMDILMSKEPSYVRCIKPND) form an actin-binding region. 2 IQ domains span residues 698–727 (KQTI…AVIV) and 721–750 (IRHA…AADT). Residues 849–1024 (KDGYSRSVPK…NGHLSVTTPR (176 aa)) form the TH1 domain.

The protein belongs to the TRAFAC class myosin-kinesin ATPase superfamily. Myosin family. Interacts (via its IQ motifs) with calm.

The protein resides in the cytoplasm. Its subcellular location is the cell cortex. It localises to the cell projection. It is found in the ruffle membrane. The protein localises to the cytoplasmic vesicle. The protein resides in the stereocilium membrane. Functionally, myosins are actin-based motor molecules with ATPase activity. Unconventional myosins serve in intracellular movements. Their highly divergent tails are presumed to bind to membranous compartments, which would be moved relative to actin filaments. The protein is Unconventional myosin-Ic (myo1c) of Danio rerio (Zebrafish).